The following is a 122-amino-acid chain: Large ribosomal subunit protein bL17 (122 aa).

Belongs to the bacterial ribosomal protein bL17 family. In terms of assembly, part of the 50S ribosomal subunit. Contacts protein L32.

The polypeptide is Large ribosomal subunit protein bL17 (Staphylococcus carnosus (strain TM300)).